The primary structure comprises 379 residues: UDP-N-acetylglucosamine--N-acetylmuramyl-(pentapeptide) pyrophosphoryl-undecaprenol N-acetylglucosamine transferase (379 aa).

UDP-N-acetyl-alpha-D-glucosamine is bound by residues 17–19 (TGG), N128, R169, S197, and Q298.

The protein belongs to the glycosyltransferase 28 family. MurG subfamily.

The protein localises to the cell inner membrane. It carries out the reaction di-trans,octa-cis-undecaprenyl diphospho-N-acetyl-alpha-D-muramoyl-L-alanyl-D-glutamyl-meso-2,6-diaminopimeloyl-D-alanyl-D-alanine + UDP-N-acetyl-alpha-D-glucosamine = di-trans,octa-cis-undecaprenyl diphospho-[N-acetyl-alpha-D-glucosaminyl-(1-&gt;4)]-N-acetyl-alpha-D-muramoyl-L-alanyl-D-glutamyl-meso-2,6-diaminopimeloyl-D-alanyl-D-alanine + UDP + H(+). The protein operates within cell wall biogenesis; peptidoglycan biosynthesis. In terms of biological role, cell wall formation. Catalyzes the transfer of a GlcNAc subunit on undecaprenyl-pyrophosphoryl-MurNAc-pentapeptide (lipid intermediate I) to form undecaprenyl-pyrophosphoryl-MurNAc-(pentapeptide)GlcNAc (lipid intermediate II). The polypeptide is UDP-N-acetylglucosamine--N-acetylmuramyl-(pentapeptide) pyrophosphoryl-undecaprenol N-acetylglucosamine transferase (Brucella melitensis biotype 2 (strain ATCC 23457)).